Here is a 338-residue protein sequence, read N- to C-terminus: Solute carrier family 35 member G6 (338 aa).

The disordered stretch occupies residues 1 to 25 (MAGSHPYLNPPDSTHPSPPSAPPSL). 9 consecutive transmembrane segments (helical) span residues 40–60 (LLVALLGGGLPAGFVGPLSHM), 67–87 (LPSLELLICRCLFHLPIALLL), 105–125 (YFYALLNVLSIGCAYSAVQVV), 160–180 (CGLLGSILGLIIIVGPGLWTL), 190–210 (ALGYGQAFVGGLALSLGLLVY), 221–241 (TVAFLSGLVGLLGSVPGLFVL), 255–275 (CVGAVGILALVSFTCVSYAVT), 281–301 (LVCAVLHSEVVVALILQYYML), and 310–330 (IVGAGVVLGSIAIITAWNLSC). The region spanning 49 to 174 (LPAGFVGPLS…SILGLIIIVG (126 aa)) is the EamA 1 domain. Residues 272-325 (YAVTKAHPALVCAVLHSEVVVALILQYYMLHETVAPSDIVGAGVVLGSIAIITA) form the EamA 2 domain.

This sequence belongs to the SLC35G solute transporter family. As to expression, expressed in placenta and testis.

Its subcellular location is the membrane. In Homo sapiens (Human), this protein is Solute carrier family 35 member G6 (SLC35G6).